Consider the following 147-residue polypeptide: 3-dehydroquinate dehydratase 2 (147 aa).

Catalysis depends on Y23, which acts as the Proton acceptor. Substrate is bound by residues N74, H80, and D87. H100 (proton donor) is an active-site residue. Substrate-binding positions include I101–S102 and R111.

The protein belongs to the type-II 3-dehydroquinase family. As to quaternary structure, homododecamer.

It catalyses the reaction 3-dehydroquinate = 3-dehydroshikimate + H2O. Its pathway is metabolic intermediate biosynthesis; chorismate biosynthesis; chorismate from D-erythrose 4-phosphate and phosphoenolpyruvate: step 3/7. Its function is as follows. Catalyzes a trans-dehydration via an enolate intermediate. This chain is 3-dehydroquinate dehydratase 2 (aroQ2), found in Agrobacterium fabrum (strain C58 / ATCC 33970) (Agrobacterium tumefaciens (strain C58)).